Here is a 172-residue protein sequence, read N- to C-terminus: Small ribosomal subunit protein uS5 (172 aa).

The S5 DRBM domain occupies 17–80 (FTEKLIKLNR…ERAKRSMVLF (64 aa)).

Belongs to the universal ribosomal protein uS5 family. In terms of assembly, part of the 30S ribosomal subunit. Contacts proteins S4 and S8.

In terms of biological role, with S4 and S12 plays an important role in translational accuracy. Located at the back of the 30S subunit body where it stabilizes the conformation of the head with respect to the body. This Treponema pallidum (strain Nichols) protein is Small ribosomal subunit protein uS5.